Consider the following 232-residue polypeptide: tRNA (guanine-N(1)-)-methyltransferase (232 aa).

Residues G112 and 132 to 137 (IGDYIL) each bind S-adenosyl-L-methionine.

Belongs to the RNA methyltransferase TrmD family. In terms of assembly, homodimer.

Its subcellular location is the cytoplasm. The catalysed reaction is guanosine(37) in tRNA + S-adenosyl-L-methionine = N(1)-methylguanosine(37) in tRNA + S-adenosyl-L-homocysteine + H(+). Functionally, specifically methylates guanosine-37 in various tRNAs. The polypeptide is tRNA (guanine-N(1)-)-methyltransferase (Methylacidiphilum infernorum (isolate V4) (Methylokorus infernorum (strain V4))).